We begin with the raw amino-acid sequence, 420 residues long: UDP-N-acetylglucosamine 1-carboxyvinyltransferase 1 (420 aa).

Residue 22–23 (KN) coordinates phosphoenolpyruvate. Residue Arg91 participates in UDP-N-acetyl-alpha-D-glucosamine binding. Cys115 functions as the Proton donor in the catalytic mechanism. At Cys115 the chain carries 2-(S-cysteinyl)pyruvic acid O-phosphothioketal. Residues 120–124 (RPMDL), Asp303, and Val325 contribute to the UDP-N-acetyl-alpha-D-glucosamine site.

Belongs to the EPSP synthase family. MurA subfamily.

Its subcellular location is the cytoplasm. It carries out the reaction phosphoenolpyruvate + UDP-N-acetyl-alpha-D-glucosamine = UDP-N-acetyl-3-O-(1-carboxyvinyl)-alpha-D-glucosamine + phosphate. Its pathway is cell wall biogenesis; peptidoglycan biosynthesis. In terms of biological role, cell wall formation. Adds enolpyruvyl to UDP-N-acetylglucosamine. This Carboxydothermus hydrogenoformans (strain ATCC BAA-161 / DSM 6008 / Z-2901) protein is UDP-N-acetylglucosamine 1-carboxyvinyltransferase 1.